Consider the following 311-residue polypeptide: tRNA dimethylallyltransferase (311 aa).

Position 10 to 17 (10 to 17) interacts with ATP; that stretch reads GPTASGKT. 12-17 contributes to the substrate binding site; sequence TASGKT. 3 interaction with substrate tRNA regions span residues 35-38, 159-163, and 240-245; these read DSAL, QRINR, and RCVGYR.

This sequence belongs to the IPP transferase family. Monomer. The cofactor is Mg(2+).

The enzyme catalyses adenosine(37) in tRNA + dimethylallyl diphosphate = N(6)-dimethylallyladenosine(37) in tRNA + diphosphate. Functionally, catalyzes the transfer of a dimethylallyl group onto the adenine at position 37 in tRNAs that read codons beginning with uridine, leading to the formation of N6-(dimethylallyl)adenosine (i(6)A). In Haemophilus influenzae (strain 86-028NP), this protein is tRNA dimethylallyltransferase.